The primary structure comprises 579 residues: Isocitrate dehydrogenase kinase/phosphatase (579 aa).

ATP contacts are provided by residues 324–330 (ADGTPGM) and lysine 345. The active site involves aspartate 380.

Belongs to the AceK family.

It is found in the cytoplasm. The enzyme catalyses L-seryl-[isocitrate dehydrogenase] + ATP = O-phospho-L-seryl-[isocitrate dehydrogenase] + ADP + H(+). In terms of biological role, bifunctional enzyme which can phosphorylate or dephosphorylate isocitrate dehydrogenase (IDH) on a specific serine residue. This is a regulatory mechanism which enables bacteria to bypass the Krebs cycle via the glyoxylate shunt in response to the source of carbon. When bacteria are grown on glucose, IDH is fully active and unphosphorylated, but when grown on acetate or ethanol, the activity of IDH declines drastically concomitant with its phosphorylation. This Xanthomonas axonopodis pv. citri (strain 306) protein is Isocitrate dehydrogenase kinase/phosphatase.